We begin with the raw amino-acid sequence, 848 residues long: Leucine--tRNA ligase (848 aa).

Positions 1 to 21 (MTENTPGTSAPERFDPATADT) are disordered. Positions 51-61 (PYPSGRIHIGH) match the 'HIGH' region motif. A 'KMSKS' region motif is present at residues 625-629 (KMSKS). K628 is a binding site for ATP.

It belongs to the class-I aminoacyl-tRNA synthetase family.

The protein resides in the cytoplasm. The enzyme catalyses tRNA(Leu) + L-leucine + ATP = L-leucyl-tRNA(Leu) + AMP + diphosphate. This Novosphingobium aromaticivorans (strain ATCC 700278 / DSM 12444 / CCUG 56034 / CIP 105152 / NBRC 16084 / F199) protein is Leucine--tRNA ligase.